We begin with the raw amino-acid sequence, 47 residues long: Large ribosomal subunit protein bL34 (47 aa).

The protein belongs to the bacterial ribosomal protein bL34 family.

The chain is Large ribosomal subunit protein bL34 (rpmH) from Mycolicibacterium smegmatis (strain ATCC 700084 / mc(2)155) (Mycobacterium smegmatis).